A 145-amino-acid chain; its full sequence is MASLATVAAVKPSAAIKGLGGSSLAGAKLSIKPSRLSFKPKSIRANGVVAKYGDKSVYFDLEDLGNTTGQWDVYGSDAPSPYNPLQSKFFETFAAPFTKRGLLLKFLILGGGSLLTYVSATSTGEVLPIKRGPQEPPKLGPRGKL.

A chloroplast-targeting transit peptide spans 1 to 50 (MASLATVAAVKPSAAIKGLGGSSLAGAKLSIKPSRLSFKPKSIRANGVVA). The helical transmembrane segment at 102-118 (LLLKFLILGGGSLLTYV) threads the bilayer.

The protein belongs to the psaH family.

The protein resides in the plastid. It localises to the chloroplast thylakoid membrane. In terms of biological role, possible role could be the docking of the LHC I antenna complex to the core complex. This Arabidopsis thaliana (Mouse-ear cress) protein is Photosystem I reaction center subunit VI-1, chloroplastic (PSAH1).